Reading from the N-terminus, the 115-residue chain is Cobalt-zinc-cadmium resistance protein CzcI (115 aa).

A signal peptide spans 1–20 (MRRFVLIFVLLILPFQFSWA). Residues 93–102 (QHSSEFSSLN) are compositionally biased toward polar residues. The segment at 93–115 (QHSSEFSSLNARAPDRPQWQRLA) is disordered.

The protein resides in the periplasm. In terms of biological role, component of the czc cation-efflux system that confers resistance to cobalt, zinc and cadmium. May have a regulatory function. This Cupriavidus metallidurans (strain ATCC 43123 / DSM 2839 / NBRC 102507 / CH34) (Ralstonia metallidurans) protein is Cobalt-zinc-cadmium resistance protein CzcI (czcI).